A 312-amino-acid polypeptide reads, in one-letter code: Small ribosomal subunit protein RACK1 (312 aa).

WD repeat units lie at residues Gly9–Lys42, Gly63–Asp93, Lys105–Asn135, Gly148–Asn180, Gly192–Asp222, Asn233–Asp262, and Pro279–Ser307.

Belongs to the WD repeat G protein beta family. Ribosomal protein RACK1 subfamily.

This chain is Small ribosomal subunit protein RACK1, found in Leishmania major.